A 112-amino-acid polypeptide reads, in one-letter code: Putative pterin-4-alpha-carbinolamine dehydratase (112 aa).

The protein belongs to the pterin-4-alpha-carbinolamine dehydratase family.

The enzyme catalyses (4aS,6R)-4a-hydroxy-L-erythro-5,6,7,8-tetrahydrobiopterin = (6R)-L-erythro-6,7-dihydrobiopterin + H2O. This Photobacterium profundum (strain SS9) protein is Putative pterin-4-alpha-carbinolamine dehydratase.